Reading from the N-terminus, the 358-residue chain is Bi-functional coumaroyl CoA and feruloyl CoA ortho-hydroxylase F6H2-1-1 (358 aa).

The Fe2OG dioxygenase domain occupies Gly-207–Pro-308. Tyr-216 provides a ligand contact to 2-oxoglutarate. Residues His-231, Asp-233, and His-289 each contribute to the Fe cation site. 2-oxoglutarate is bound by residues Arg-299 and Ser-301.

Belongs to the iron/ascorbate-dependent oxidoreductase family. Requires L-ascorbate as cofactor. Fe(2+) is required as a cofactor. As to expression, mostly expressed in underground stems and stems, and, at low levels, in tubers, leaves and petioles.

It catalyses the reaction (E)-4-coumaroyl-CoA + 2-oxoglutarate + O2 = (E)-2,4-dihydroxycinnamoyl-CoA + succinate + CO2. The catalysed reaction is (E)-feruloyl-CoA + 2-oxoglutarate + O2 = (E)-6-hydroxyferuloyl-CoA + succinate + CO2. It participates in phenylpropanoid metabolism. In terms of biological role, 2-oxoglutarate (OG)- and Fe(II)-dependent dioxygenase (2OGD) involved in scopoletin and umbelliferone biosynthesis. Converts feruloyl CoA into 6'-hydroxyferuloyl CoA, and p-coumaroyl CoA into 2,4-dihydroxycinnamoyl-CoA, but has no activity with caffeoyl-CoA. The chain is Bi-functional coumaroyl CoA and feruloyl CoA ortho-hydroxylase F6H2-1-1 from Ipomoea batatas (Sweet potato).